The following is a 188-amino-acid chain: Molybdopterin synthase catalytic subunit (188 aa).

Residues 1 to 10 (MSTSETSSYT) show a composition bias toward polar residues. The tract at residues 1–21 (MSTSETSSYTPDIPSEPVTKT) is disordered. Substrate-binding positions include 123–124 (HR), Lys139, and 146–148 (KLE).

This sequence belongs to the MoaE family. MOCS2B subfamily. In terms of assembly, heterotetramer; composed of 2 small (MOCS2A) and 2 large (MOCS2B) subunits.

It is found in the cytoplasm. It carries out the reaction 2 [molybdopterin-synthase sulfur-carrier protein]-C-terminal-Gly-aminoethanethioate + cyclic pyranopterin phosphate + H2O = molybdopterin + 2 [molybdopterin-synthase sulfur-carrier protein]-C-terminal Gly-Gly + 2 H(+). Its pathway is cofactor biosynthesis; molybdopterin biosynthesis. Its function is as follows. Catalytic subunit of the molybdopterin synthase complex, a complex that catalyzes the conversion of precursor Z into molybdopterin. Acts by mediating the incorporation of 2 sulfur atoms from thiocarboxylated MOCS2A into precursor Z to generate a dithiolene group. This is Molybdopterin synthase catalytic subunit from Phaeosphaeria nodorum (strain SN15 / ATCC MYA-4574 / FGSC 10173) (Glume blotch fungus).